Consider the following 356-residue polypeptide: Heat-inducible transcription repressor HrcA (356 aa).

This sequence belongs to the HrcA family.

In terms of biological role, negative regulator of class I heat shock genes (grpE-dnaK-dnaJ and groELS operons). Prevents heat-shock induction of these operons. The sequence is that of Heat-inducible transcription repressor HrcA from Bartonella tribocorum (strain CIP 105476 / IBS 506).